The following is a 436-amino-acid chain: Prenyltransferase nscD (436 aa).

The protein belongs to the tryptophan dimethylallyltransferase family.

Its pathway is secondary metabolite biosynthesis. Prenyltransferase; part of the gene cluster that mediates the biosynthesis of neosartoricin B, a prenylated anthracenone that probably exhibits T-cell antiproliferative activity, suggestive of a physiological role as an immunosuppressive agent. The non-reducing polyketide synthase nscA probably synthesizes and cyclizes the decaketide backbone. The hydrolase nscB then mediates the product release through hydrolysis followed by spontaneous decarboxylation. The prenyltransferase nscD catalyzes the addition of the dimethylallyl group to the aromatic C5. The FAD-dependent monooxygenase nscC is then responsible for the stereospecific hydroxylation at C2. Neosartoricin B can be converted into two additional compounds neosartoricins C and D. Neosartoricin C is a spirocyclic compound that is cyclized through the attack of C3 hydroxyl on C14, followed by dehydration. On the other hand, neosartoricin D is a further cyclized compound in which attack of C2 on C14 in neosartoricin C results in the formation of the acetal-containing dioxabicyclo-octanone ring. Both of these compounds are novel and possibly represent related metabolites of the gene cluster. The polypeptide is Prenyltransferase nscD (Arthroderma benhamiae (strain ATCC MYA-4681 / CBS 112371) (Trichophyton mentagrophytes)).